We begin with the raw amino-acid sequence, 160 residues long: UPF0225 protein PP_1119 (160 aa).

It belongs to the UPF0225 family.

This chain is UPF0225 protein PP_1119, found in Pseudomonas putida (strain ATCC 47054 / DSM 6125 / CFBP 8728 / NCIMB 11950 / KT2440).